The chain runs to 507 residues: ATP synthase subunit alpha, chloroplastic (507 aa).

ATP is bound at residue 170–177 (GDRQTGKT).

Belongs to the ATPase alpha/beta chains family. F-type ATPases have 2 components, CF(1) - the catalytic core - and CF(0) - the membrane proton channel. CF(1) has five subunits: alpha(3), beta(3), gamma(1), delta(1), epsilon(1). CF(0) has four main subunits: a, b, b' and c.

Its subcellular location is the plastid. It localises to the chloroplast thylakoid membrane. The enzyme catalyses ATP + H2O + 4 H(+)(in) = ADP + phosphate + 5 H(+)(out). Produces ATP from ADP in the presence of a proton gradient across the membrane. The alpha chain is a regulatory subunit. This is ATP synthase subunit alpha, chloroplastic from Marchantia polymorpha (Common liverwort).